A 494-amino-acid chain; its full sequence is Splicing regulatory glutamine/lysine-rich protein 1 (494 aa).

Residues 69–145 (RTVYVGNLNS…RPLKINHSNN (77 aa)) form the RRM domain. Phosphoserine is present on residues S174 and S187. The interval 176–494 (ISAAIEPESG…ERLCSTADAV (319 aa)) is disordered. Residues 183–192 (ESGKSNERKG) are compositionally biased toward basic and acidic residues. 2 stretches are compositionally biased toward basic residues: residues 193 to 230 (GRSR…RSRS) and 238 to 262 (SKSP…RSRD). The span at 263 to 340 (KRKDTREKVK…DRSKEADEKR (78 aa)) shows a compositional bias: basic and acidic residues. Phosphothreonine is present on T348. Residues 357-373 (RRSRSASRERRRRRSRS) show a composition bias toward basic residues. Basic and acidic residues-rich tracts occupy residues 404–453 (REKE…KEAD) and 463–474 (KDTARTEEESKA).

It belongs to the splicing factor SR family. As to quaternary structure, interacts with SREK1IP1. Homodimer. Binds SFRS1, SFRS2, SFRS3 and SFRS6. Interacts with the spliceosome. Ubiquitous. Detected in liver, brain, lung, spleen, testis and pancreas.

Its subcellular location is the nucleus. Participates in the regulation of alternative splicing by modulating the activity of other splice facors. Inhibits the splicing activity of SFRS1, SFRS2 and SFRS6. Augments the splicing activity of SFRS3. The chain is Splicing regulatory glutamine/lysine-rich protein 1 (Srek1) from Rattus norvegicus (Rat).